The chain runs to 73 residues: Translational regulator CsrA (73 aa).

The disordered stretch occupies residues 54–73; it reads ENRAASDSPWSPNSLPQLPV. The segment covering 61-73 has biased composition (polar residues); that stretch reads SPWSPNSLPQLPV.

The protein belongs to the CsrA/RsmA family. Homodimer; the beta-strands of each monomer intercalate to form a hydrophobic core, while the alpha-helices form wings that extend away from the core.

The protein resides in the cytoplasm. Functionally, a translational regulator that binds mRNA to regulate translation initiation and/or mRNA stability. Usually binds in the 5'-UTR at or near the Shine-Dalgarno sequence preventing ribosome-binding, thus repressing translation. Its main target seems to be the major flagellin gene, while its function is anatagonized by FliW. This chain is Translational regulator CsrA, found in Treponema pallidum (strain Nichols).